Here is a 459-residue protein sequence, read N- to C-terminus: Argininosuccinate lyase (459 aa).

This sequence belongs to the lyase 1 family. Argininosuccinate lyase subfamily.

The protein localises to the cytoplasm. The enzyme catalyses 2-(N(omega)-L-arginino)succinate = fumarate + L-arginine. The protein operates within amino-acid biosynthesis; L-arginine biosynthesis; L-arginine from L-ornithine and carbamoyl phosphate: step 3/3. The protein is Argininosuccinate lyase of Photorhabdus laumondii subsp. laumondii (strain DSM 15139 / CIP 105565 / TT01) (Photorhabdus luminescens subsp. laumondii).